The chain runs to 120 residues: BolA-like protein 2 (120 aa).

This sequence belongs to the BolA/IbaG family. Interacts with FRA1, GRX3 and GRX4.

The protein localises to the cytoplasm. It localises to the nucleus. Functionally, involved in the regulation of the iron regulon in response to decreased mitochondrial iron-sulfur cluster synthesis. May be involved in mitochondrial organization and biogenesis. This is BolA-like protein 2 (BOL2) from Saccharomyces cerevisiae (strain ATCC 204508 / S288c) (Baker's yeast).